Consider the following 320-residue polypeptide: Alpha/beta hydrolase domain-containing protein 17C (320 aa).

The segment at 50–75 (RAPAPAATPAPAPAAQPAPAEEGAGP) is disordered. Pro residues predominate over residues 55-65 (AATPAPAPAAQ). Residues serine 202, aspartate 267, and histidine 296 each act as charge relay system in the active site.

This sequence belongs to the AB hydrolase superfamily. ABHD17 family. In terms of processing, palmitoylated on cysteine residues located in a cysteine cluster at the N-terminus which promotes membrane localization. Palmitoylation is required for post-synaptic localization and for depalmitoylating activity towards DLG4/PSD95.

It localises to the recycling endosome membrane. The protein resides in the cell projection. Its subcellular location is the dendritic spine. The protein localises to the postsynaptic density membrane. The enzyme catalyses S-hexadecanoyl-L-cysteinyl-[protein] + H2O = L-cysteinyl-[protein] + hexadecanoate + H(+). Hydrolyzes fatty acids from S-acylated cysteine residues in proteins. Has depalmitoylating activity towards DLG4/PSD95. This chain is Alpha/beta hydrolase domain-containing protein 17C, found in Mus musculus (Mouse).